A 1119-amino-acid polypeptide reads, in one-letter code: MDVDEIESAGQINISELGESFLQTFCKKAATSFFEEFGLISHQLNSYNFFIEHGLQNVFESFGDILVEPSFDVIKKKDGDWRYATVFKKIVIKHDKFKTGQDEYVEKEILDVKKQDILIGSIPVMVKSVLCKTSEKGKENCKKGNCAFDQGGYFVIKGAEKVFIAQEQMCTKRLWISNSPWTVSFRSETKRNRFIVRLSENEKAEDYKIMEKVLTVYFLSTEIPVWLLFFALGVSSDKEAMDLIAFDGDDASITNSLIASIHEADAVCEAFRCGNNALTYVEHQIKSTKFPPAESVDDCLRLYLFPCLQGLKKKARFLGYMVKCLLSAYAGKRKCENRDSFRNKRIELAGELLEREIRVHLAHARRKMTRAMQKQLSGDGDLKPIEHYLDASVITNGLNRAFSTGAWSHPFRKMERVSGVVANLGRANPLQTLIDLRRTRQQVLYTGKVGDARHPHPSHWGRVCFLSTPDGENCGLVKNMSLLGLVSTQGLESVVEMLFTCGMEELMNDTSTPLCGKHKVLLNGDWVGLCADSESFVGELKSRRRQSELPLEMEIKRDKDDNEVRIFTDAGRLLRPLLVVENLHKLKQDKPTQYPFKHLLDQGILELIGIEEEEDCTTAWGIKQLLKEPKNYTHCELDLSFLLGVSCAIVPFANHDHGKRVLYQSQKHCQQAIGFSSTNPNIRCDTLSQQLFYPQKPLFKTLASECLEKEVLFNGQNAIVAVNVHLGYNQEDSIVMNKASLERGMFRSEQIRSYKAEVDTKDSEKRKKMDELVQFGKTYSKIGKVDSLEDDGFPFIGANMSTGDIVIGRCTESGADHSIKLKHTERGIVQKVVLSSNDEGKNFAAVSLRQVRSPCLGDKFSSMHGQKGVLGYLEEQQNFPFTIQGIVPDIVINPHAFPSRQTPGQLLEAALSKGIACPIQKKEGSSAAYTKLTRHATPFSTPGVTEITEQLHRAGFSRWGNERVYNGRSGEMMRSLIFMGPTFYQRLVHMSENKVKFRNTGPVHPLTRQPVADRKRFGGIRFGEMERDCLIAHGASANLHERLFTLSDSSQMHICRKCKTYANVIERTPSSGRKIRGPYCRVCASSDHVVRVYVPYGAKLLCQELFSMGITLNFDTKLC.

Asp732 contacts Mg(2+). Residues Cys1055, Cys1058, Cys1080, and Cys1083 each contribute to the Zn(2+) site. The C4-type zinc-finger motif lies at Cys1055–Cys1083.

The protein belongs to the RNA polymerase beta chain family. In terms of assembly, component of the RNA polymerase IVa and IVb (Pol IV) complexes.

It localises to the nucleus. The catalysed reaction is RNA(n) + a ribonucleoside 5'-triphosphate = RNA(n+1) + diphosphate. In terms of biological role, DNA-dependent RNA polymerase catalyzes the transcription of DNA into RNA using the four ribonucleoside triphosphates as substrates. Second largest component of RNA polymerase IVa and IVb which mediate short-interfering RNAs (siRNA) accumulation and subsequent RNA-directed DNA methylation-dependent (RdDM) silencing of endogenous repeated sequences, including transposable largest subunit. Also required for full erasure of methylation elements. Required for intercellular RNA interference (RNAi) leading to systemic post-transcriptional gene silencing. This chain is DNA-directed RNA polymerase D subunit 2b (NRPD2b), found in Arabidopsis thaliana (Mouse-ear cress).